The sequence spans 122 residues: Cytochrome b-c1 complex subunit 7-2, mitochondrial (122 aa).

It belongs to the UQCRB/QCR7 family. As to quaternary structure, component of the ubiquinol-cytochrome c oxidoreductase (cytochrome b-c1 complex, complex III, CIII), a multisubunit enzyme composed of 10 subunits. The complex is composed of 3 respiratory subunits cytochrome b (MT-CYB), cytochrome c1 (CYC1-1 or CYC1-2) and Rieske protein (UCR1-1 or UCR1-2), 2 core protein subunits MPPalpha1 (or MPPalpha2) and MPPB, and 5 low-molecular weight protein subunits QCR7-1 (or QCR7-2), UCRQ-1 (or UCRQ-2), QCR9, UCRY and probably QCR6-1 (or QCR6-2). The complex exists as an obligatory dimer and forms supercomplexes (SCs) in the inner mitochondrial membrane with NADH-ubiquinone oxidoreductase (complex I, CI), resulting in different assemblies (supercomplexes SCI(1)III(2) and SCI(2)III(4)).

It is found in the mitochondrion inner membrane. Its function is as follows. Component of the ubiquinol-cytochrome c oxidoreductase, a multisubunit transmembrane complex that is part of the mitochondrial electron transport chain which drives oxidative phosphorylation. The respiratory chain contains 3 multisubunit complexes succinate dehydrogenase (complex II, CII), ubiquinol-cytochrome c oxidoreductase (cytochrome b-c1 complex, complex III, CIII) and cytochrome c oxidase (complex IV, CIV), that cooperate to transfer electrons derived from NADH and succinate to molecular oxygen, creating an electrochemical gradient over the inner membrane that drives transmembrane transport and the ATP synthase. The cytochrome b-c1 complex catalyzes electron transfer from ubiquinol to cytochrome c, linking this redox reaction to translocation of protons across the mitochondrial inner membrane, with protons being carried across the membrane as hydrogens on the quinol. In the process called Q cycle, 2 protons are consumed from the matrix, 4 protons are released into the intermembrane space and 2 electrons are passed to cytochrome c. The protein is Cytochrome b-c1 complex subunit 7-2, mitochondrial (QCR7-2) of Arabidopsis thaliana (Mouse-ear cress).